Here is an 89-residue protein sequence, read N- to C-terminus: Small ribosomal subunit protein uS14A (89 aa).

Belongs to the universal ribosomal protein uS14 family. As to quaternary structure, part of the 30S ribosomal subunit. Contacts proteins S3 and S10.

Binds 16S rRNA, required for the assembly of 30S particles and may also be responsible for determining the conformation of the 16S rRNA at the A site. The sequence is that of Small ribosomal subunit protein uS14A from Bacillus velezensis (strain DSM 23117 / BGSC 10A6 / LMG 26770 / FZB42) (Bacillus amyloliquefaciens subsp. plantarum).